The chain runs to 177 residues: Disulfide bond formation protein B (177 aa).

The Cytoplasmic segment spans residues 1-14 (MMVWNWIDRTPRRV). The helical transmembrane segment at 15–31 (LALISLACVALLACGLY) threads the bilayer. At 32 to 49 (LQHVVGLVPCPMCIVQRY) the chain is on the periplasmic side. C41 and C44 are joined by a disulfide. The helical transmembrane segment at 50 to 64 (ALIGLALLTGLASAR) threads the bilayer. Residues 65–70 (SAKGWW) lie on the Cytoplasmic side of the membrane. The helical transmembrane segment at 71–89 (LTLSALAALTAGFGATVAA) threads the bilayer. Residues 90–145 (RQSWLQWYPPQSVSCGRDFYGMIESFPLSRAIPMILRGSGDCAAVDWSLLGGSIAN) lie on the Periplasmic side of the membrane. A disulfide bridge connects residues C104 and C131. Residues 146-164 (WSFLCFALLGLLLLALLAR) traverse the membrane as a helical segment. Over 165 to 177 (GVRGARQRAPAPV) the chain is Cytoplasmic.

It belongs to the DsbB family.

It localises to the cell inner membrane. Its function is as follows. Required for disulfide bond formation in some periplasmic proteins. Acts by oxidizing the DsbA protein. This Verminephrobacter eiseniae (strain EF01-2) protein is Disulfide bond formation protein B.